A 380-amino-acid polypeptide reads, in one-letter code: tRNA pseudouridine synthase B (380 aa).

The active-site Nucleophile is aspartate 63. Residues 309–339 form a disordered region; that stretch reads QNVEDDNDDNDDNDDNDDNDDNDDNDDNDDN. Acidic residues predominate over residues 311 to 338; that stretch reads VEDDNDDNDDNDDNDDNDDNDDNDDNDD.

The protein belongs to the pseudouridine synthase TruB family. Type 1 subfamily.

It catalyses the reaction uridine(55) in tRNA = pseudouridine(55) in tRNA. Its function is as follows. Responsible for synthesis of pseudouridine from uracil-55 in the psi GC loop of transfer RNAs. The sequence is that of tRNA pseudouridine synthase B from Psychrobacter arcticus (strain DSM 17307 / VKM B-2377 / 273-4).